We begin with the raw amino-acid sequence, 273 residues long: Large ribosomal subunit protein uL2c (273 aa).

This sequence belongs to the universal ribosomal protein uL2 family. Part of the 50S ribosomal subunit.

The protein localises to the plastid. It localises to the apicoplast. The sequence is that of Large ribosomal subunit protein uL2c (rpl2) from Eimeria tenella (Coccidian parasite).